The sequence spans 999 residues: Nonsense-mediated mRNA decay factor SMG8 (999 aa).

3 disordered regions span residues Ser-15–Trp-42, Gln-83–Thr-136, and Pro-287–Arg-307. The span at Thr-18–Pro-27 shows a compositional bias: low complexity. A compositionally biased stretch (gly residues) spans Gly-100–Ala-120. Residues Pro-287–Asp-297 are compositionally biased toward basic and acidic residues. Residues Lys-298–Arg-307 show a composition bias toward basic residues. Phosphoserine occurs at positions 477 and 676. Positions Phe-661 to Gly-734 are disordered. The span at Asp-683–Pro-692 shows a compositional bias: basic and acidic residues. The segment covering Gln-693–Leu-714 has biased composition (polar residues). Phosphoserine occurs at positions 750 and 903. At Arg-906 the chain carries Omega-N-methylarginine.

This sequence belongs to the SMG8 family. As to quaternary structure, component of the SMG1C complex composed of SMG1, SMG8 and SMG9; the recruitment of SMG8 to SMG1 N-terminus induces a large conformational change in the SMG1 C-terminal head domain containing the catalytic domain. Forms heterodimers with SMG9; this assembly form may represent a SMG1C intermediate form. Phosphorylated by SMG1.

Involved in nonsense-mediated decay (NMD) of mRNAs containing premature stop codons. Is recruited by release factors to stalled ribosomes together with SMG1 and SMG9 (forming the SMG1C protein kinase complex) and, in the SMG1C complex, is required to mediate the recruitment of SMG1 to the ribosome:SURF complex and to suppress SMG1 kinase activity until the ribosome:SURF complex locates the exon junction complex (EJC). Acts as a regulator of kinase activity. This chain is Nonsense-mediated mRNA decay factor SMG8 (SMG8), found in Bos taurus (Bovine).